The primary structure comprises 298 residues: Glycine--tRNA ligase alpha subunit (298 aa).

This sequence belongs to the class-II aminoacyl-tRNA synthetase family. As to quaternary structure, tetramer of two alpha and two beta subunits.

It localises to the cytoplasm. It catalyses the reaction tRNA(Gly) + glycine + ATP = glycyl-tRNA(Gly) + AMP + diphosphate. This is Glycine--tRNA ligase alpha subunit (glyQ) from Helicobacter pylori (strain J99 / ATCC 700824) (Campylobacter pylori J99).